The following is a 496-amino-acid chain: Solute carrier family 2, facilitated glucose transporter member 3 (496 aa).

Residues 1 to 10 are Cytoplasmic-facing; the sequence is MGTQKVTPAL. A helical membrane pass occupies residues 11 to 32; the sequence is IFAITVATIGSFQFGYNTGVIN. Topologically, residues 33–64 are extracellular; that stretch reads APEKIIKEFINKTLTDKGNAPPSEVLLTSLWS. N-linked (GlcNAc...) asparagine glycosylation occurs at Asn-43. A helical transmembrane segment spans residues 65–85; it reads LSVAIFSVGGMIGSFSVGLFV. Residues 86–90 lie on the Cytoplasmic side of the membrane; it reads NRFGR. The helical transmembrane segment at 91–111 threads the bilayer; the sequence is RNSMLIVNLLAVTGGCFMGLC. The Extracellular portion of the chain corresponds to 112–118; that stretch reads KVAKSVE. Residues 119-142 traverse the membrane as a helical segment; sequence MLILGRLVIGLFCGLCTGFVPMYI. The Cytoplasmic portion of the chain corresponds to 143–153; it reads GEISPTALRGA. The helical transmembrane segment at 154-174 threads the bilayer; the sequence is FGTLNQLGIVVGILVAQIFGL. D-glucose is bound at residue Gln-159. Over 175–183 the chain is Extracellular; it reads EFILGSEEL. Residues 184-204 traverse the membrane as a helical segment; the sequence is WPLLLGFTILPAILQSAALPF. Residues 205–269 are Cytoplasmic-facing; it reads CPESPRFLLI…LFRVSSYRQP (65 aa). Position 232 is a phosphothreonine (Thr-232). A helical transmembrane segment spans residues 270 to 290; it reads IIISIVLQLSQQLSGINAVFY. The important for selectivity against fructose stretch occupies residues 277–279; that stretch reads QLS. D-glucose contacts are provided by residues 280–281 and Asn-286; that span reads QQ. Residues 291-304 lie on the Extracellular side of the membrane; sequence YSTGIFKDAGVQEP. A helical transmembrane segment spans residues 305-325; the sequence is IYATIGAGVVNTIFTVVSLFL. Asn-315 lines the D-glucose pocket. Topologically, residues 326–331 are cytoplasmic; it reads VERAGR. A helical membrane pass occupies residues 332 to 352; sequence RTLHMIGLGGMAFCSTLMTVS. Topologically, residues 353-363 are extracellular; the sequence is LLLKDNYNGMS. Residues 364 to 389 form a helical membrane-spanning segment; it reads FVCIGAILVFVAFFEIGPGPIPWFIV. The D-glucose site is built by Glu-378 and Trp-386. Residues 390-399 lie on the Cytoplasmic side of the membrane; the sequence is AELFSQGPRP. The chain crosses the membrane as a helical span at residues 400–420; that stretch reads AAMAVAGCSNWTSNFLVGLLF. Residues 421–429 lie on the Extracellular side of the membrane; it reads PSAAHYLGA. The helical transmembrane segment at 430-450 threads the bilayer; it reads YVFIIFTGFLITFLAFTFFKV. Over 451 to 496 the chain is Cytoplasmic; it reads PETRGRTFEDITRAFEGQAHGADRSGKDGVMEMNSIEPAKETTTNV. Phosphoserine occurs at positions 475 and 485. A Phosphothreonine modification is found at Thr-492.

It belongs to the major facilitator superfamily. Sugar transporter (TC 2.A.1.1) family. Glucose transporter subfamily. Interacts with SMIM43; the interaction may promote SLC2A3-mediated glucose transport to meet the energy needs of mesendoderm differentiation. In terms of tissue distribution, highly expressed in brain. Expressed in many tissues.

The protein resides in the cell membrane. Its subcellular location is the perikaryon. It localises to the cell projection. The catalysed reaction is D-glucose(out) = D-glucose(in). It carries out the reaction D-galactose(in) = D-galactose(out). Deoxyglucose transport is inhibited by D-glucose, D-galactose and maltose. Galactose transport is inhibited by D-glucose and maltose. Facilitative glucose transporter. Can also mediate the uptake of various other monosaccharides across the cell membrane. Mediates the uptake of glucose, 2-deoxyglucose, galactose, mannose, xylose and fucose, and probably also dehydroascorbate. Does not mediate fructose transport. Required for mesendoderm differentiation. The protein is Solute carrier family 2, facilitated glucose transporter member 3 of Homo sapiens (Human).